A 256-amino-acid chain; its full sequence is MVEIHDSRMDRGAGAVRLQKILSRAGIASRRAAEKLIIEGRVEVDGQLVRELGTRVDPDVSVVRVDGVKVVVDDSLVYLALNKPRGMYSTMSDDRGRPCVGDLIERRVRGNKKLFHVGRLDADTEGLILLTNDGELAHRLMHPSHEVSKTYLATVKGAVPRGLGKKLSVGLELDDGPAHVDDFAVVDAIPGKTLVRLTLHEGRKRIVRRLLTAAGFPVEMLVRTDIGAVSLGDQRPGCLRALLRDEIRQLYKEVGL.

The 68-residue stretch at 16 to 83 (VRLQKILSRA…DSLVYLALNK (68 aa)) folds into the S4 RNA-binding domain. The Nucleophile role is filled by aspartate 121.

The protein belongs to the pseudouridine synthase RsuA family.

The catalysed reaction is a uridine in RNA = a pseudouridine in RNA. This is an uncharacterized protein from Mycobacterium leprae (strain TN).